Consider the following 214-residue polypeptide: Pyridoxine/pyridoxamine 5'-phosphate oxidase (214 aa).

Substrate contacts are provided by residues 8-11 and K66; that span reads RTNY. Residues 61 to 66, 76 to 77, R82, K83, and Q105 contribute to the FMN site; these read RIVLIK and FT. Substrate-binding residues include Y123, R127, and S131. FMN-binding positions include 140–141 and W184; that span reads QS. 190–192 serves as a coordination point for substrate; that stretch reads RLH. An FMN-binding site is contributed by R194.

This sequence belongs to the pyridoxamine 5'-phosphate oxidase family. As to quaternary structure, homodimer. Requires FMN as cofactor.

It catalyses the reaction pyridoxamine 5'-phosphate + O2 + H2O = pyridoxal 5'-phosphate + H2O2 + NH4(+). The enzyme catalyses pyridoxine 5'-phosphate + O2 = pyridoxal 5'-phosphate + H2O2. It participates in cofactor metabolism; pyridoxal 5'-phosphate salvage; pyridoxal 5'-phosphate from pyridoxamine 5'-phosphate: step 1/1. The protein operates within cofactor metabolism; pyridoxal 5'-phosphate salvage; pyridoxal 5'-phosphate from pyridoxine 5'-phosphate: step 1/1. Catalyzes the oxidation of either pyridoxine 5'-phosphate (PNP) or pyridoxamine 5'-phosphate (PMP) into pyridoxal 5'-phosphate (PLP). This Burkholderia pseudomallei (strain 1106a) protein is Pyridoxine/pyridoxamine 5'-phosphate oxidase.